The following is an 838-amino-acid chain: Probable inorganic carbon transporter subunit DabA (838 aa).

The Zn(2+) site is built by Cys353, Asp355, His537, and Cys552.

Belongs to the inorganic carbon transporter (TC 9.A.2) DabA family. As to quaternary structure, forms a complex with DabB. Requires Zn(2+) as cofactor.

The protein resides in the cell membrane. In terms of biological role, part of an energy-coupled inorganic carbon pump. This is Probable inorganic carbon transporter subunit DabA from Chloroflexus aurantiacus (strain ATCC 29366 / DSM 635 / J-10-fl).